Here is a 341-residue protein sequence, read N- to C-terminus: Major capsid protein (341 aa).

Residues 109–129 (RRIILQNMKDEELAIAQVEEK) are a coiled coil.

This sequence belongs to the lambda phage major capsid protein family. As to quaternary structure, homomultimer.

Its subcellular location is the virion. It localises to the host cytoplasm. Its function is as follows. Assembles to form an icosahedral capsid with a T=7 symmetry. The icosahedral capsid is about 60 nm in diameter and composed of 415 major capsid proteins. The assembly is primed by the interaction between capsid assembly protease and portal dodecamer, and major capsid proteins assemble cooperatively to form the procapsid with the help of capsid scaffolding protein. Major capsid protein forms hexons and pentons of the icosahedron. Viral genomic DNA is packaged into the procapsid through the portal vertex. The packaging triggers a dramatic reconfiguration of the capsid shell. This Enterobacteria phage phi80 (Bacteriophage phi-80) protein is Major capsid protein (E).